Reading from the N-terminus, the 243-residue chain is Adenosylcobinamide-GDP ribazoletransferase (243 aa).

5 helical membrane passes run 31 to 48 (LLFYPLVGLLFGVLLWVL), 61 to 81 (AALLLTAWVLLSGGLHLDGLA), 109 to 129 (IAVVTLVLVLLLKFTALVALI), 134 to 154 (GFALLLAPLIGRGALLGLFLC), and 188 to 208 (LLLGGYSGLWAVLLATVLFFW).

This sequence belongs to the CobS family. Mg(2+) serves as cofactor.

Its subcellular location is the cell inner membrane. The catalysed reaction is alpha-ribazole + adenosylcob(III)inamide-GDP = adenosylcob(III)alamin + GMP + H(+). It catalyses the reaction alpha-ribazole 5'-phosphate + adenosylcob(III)inamide-GDP = adenosylcob(III)alamin 5'-phosphate + GMP + H(+). It functions in the pathway cofactor biosynthesis; adenosylcobalamin biosynthesis; adenosylcobalamin from cob(II)yrinate a,c-diamide: step 7/7. Joins adenosylcobinamide-GDP and alpha-ribazole to generate adenosylcobalamin (Ado-cobalamin). Also synthesizes adenosylcobalamin 5'-phosphate from adenosylcobinamide-GDP and alpha-ribazole 5'-phosphate. This chain is Adenosylcobinamide-GDP ribazoletransferase, found in Pseudomonas fluorescens (strain ATCC BAA-477 / NRRL B-23932 / Pf-5).